We begin with the raw amino-acid sequence, 424 residues long: NuA4 complex subunit EAF3 homolog (424 aa).

The region spanning valine 23 to valine 73 is the Tudor-knot domain. The segment at alanine 88–cysteine 243 is disordered. Over residues lysine 97–alanine 106 the composition is skewed to basic residues. Basic and acidic residues predominate over residues lysine 107–serine 116. The residue at position 119 (serine 119) is a Phosphoserine. Low complexity predominate over residues serine 122–serine 165. Phosphothreonine occurs at positions 175, 183, 196, and 197. A Phosphoserine modification is found at serine 211. Positions threonine 232–proline 242 are enriched in low complexity. Position 235 is a phosphothreonine (threonine 235). Residues alanine 252–glutamine 424 form the MRG domain.

As to quaternary structure, component of the Tip60 chromatin-remodeling complex which contains the catalytic subunit Tip60 and the subunits Domino, Tra1, Brd8, E(Pc), DMAP1, Pontin, Reptin, Ing3, Act87E, BAP55, Mrg15, MrgBP, Gas41 and YL-1.

The protein localises to the nucleus. Part of the Tip60 chromatin-remodeling complex which is involved in DNA repair. Upon induction of DNA double-strand breaks, this complex acetylates phosphorylated H2AV in nucleosomes and exchanges it with unmodified H2AV. In Drosophila melanogaster (Fruit fly), this protein is NuA4 complex subunit EAF3 homolog (MRG15).